A 187-amino-acid polypeptide reads, in one-letter code: dITP/XTP pyrophosphatase (187 aa).

7-12 (TNNPYK) contacts substrate. Residues Glu-36 and Asp-65 each contribute to the Mg(2+) site. Asp-65 serves as the catalytic Proton acceptor. Substrate contacts are provided by residues Thr-66, 140 to 143 (FGYD), Lys-163, and 168 to 169 (HR).

Belongs to the HAM1 NTPase family. As to quaternary structure, homodimer. The cofactor is Mg(2+).

It carries out the reaction XTP + H2O = XMP + diphosphate + H(+). It catalyses the reaction dITP + H2O = dIMP + diphosphate + H(+). The catalysed reaction is ITP + H2O = IMP + diphosphate + H(+). Its function is as follows. Pyrophosphatase that catalyzes the hydrolysis of nucleoside triphosphates to their monophosphate derivatives, with a high preference for the non-canonical purine nucleotides XTP (xanthosine triphosphate), dITP (deoxyinosine triphosphate) and ITP. Seems to function as a house-cleaning enzyme that removes non-canonical purine nucleotides from the nucleotide pool, thus preventing their incorporation into DNA/RNA and avoiding chromosomal lesions. This chain is dITP/XTP pyrophosphatase, found in Pyrobaculum aerophilum (strain ATCC 51768 / DSM 7523 / JCM 9630 / CIP 104966 / NBRC 100827 / IM2).